The chain runs to 40 residues: Natriuretic peptide PtNP-a (40 aa).

Cysteine 9 and cysteine 25 are disulfide-bonded. A compositionally biased stretch (polar residues) spans 17–34 (ISNTSGMGCRNPIQNRPK). Positions 17-40 (ISNTSGMGCRNPIQNRPKSTPGGS) are disordered.

It belongs to the natriuretic peptide family. Expressed by the venom gland.

The protein resides in the secreted. Functionally, snake venom natriuretic peptide that targets NPR1 and possibly NPR2. Exhibits hypotensive and vasodepressor activities. Recombinant PtNP-a demonstrates a dose-dependent stimulation of cGMP production via the natriuretic peptide receptor 1 (NPR1) (EC(50)=563 nM) in Madine Darby Canine Kidney (MDCK) cells. It also inhibits the angiotensin converting enzyme (ACE). This Pseudonaja textilis (Eastern brown snake) protein is Natriuretic peptide PtNP-a.